The chain runs to 110 residues: MSGWYELSKSSNDQFKFVLKAGNGEVILTSELYTGKSGAMNGIESVQTNSPIEARYAKEVAKNDKPYFNLKAANHQIIGTSQMYSSTAARDNGIKSVMENGKTTTIKDLT.

2 tandem repeats follow at residues 10-58 (SSND…RYAK) and 61-109 (AKND…IKDL).

This sequence belongs to the UPF0339 family. Duplicated subfamily.

The polypeptide is UPF0339 protein SO_3888 (Shewanella oneidensis (strain ATCC 700550 / JCM 31522 / CIP 106686 / LMG 19005 / NCIMB 14063 / MR-1)).